A 221-amino-acid polypeptide reads, in one-letter code: Proline-rich protein 20A (221 aa).

Disordered regions lie at residues 1–103 (MEEP…QRQG) and 137–174 (SLSE…GPQA). The span at 42–53 (PAQPAQPAKPIA) shows a compositional bias: low complexity. Residues 63 to 72 (PARPESPPPA) are compositionally biased toward pro residues. A compositionally biased stretch (basic residues) spans 75-93 (GRRRGGSRRPGRGRGRRAG).

The protein belongs to the PRR20 family.

This Homo sapiens (Human) protein is Proline-rich protein 20A (PRR20A).